Here is a 471-residue protein sequence, read N- to C-terminus: Probable anion transporter 5, chloroplastic (471 aa).

The transit peptide at 1-59 (MAASASASALQAERCLLVGVGAGPRRHRLPLRMPPPLHAPPALLLLPHRRRRRWPPAVR) directs the protein to the chloroplast. The interval 56–76 (PAVRASPGEGGGGGGGGGGGG) is disordered. The next 4 membrane-spanning stretches (helical) occupy residues 62-82 (PGEGGGGGGGGGGGGGLAGAL), 103-123 (IGVVAWSLATAIIPAVAGFMP), 162-182 (VVFGGLSFGSVLGLLFAPPII), and 185-205 (LGWESVFYIFGLLGIIWCLGF). The segment covering 63–76 (GEGGGGGGGGGGGG) has biased composition (gly residues). Residues 226–247 (GQSPSGSSDLISSSVSPKSSES) are disordered. The span at 228–247 (SPSGSSDLISSSVSPKSSES) shows a compositional bias: low complexity. 6 helical membrane-spanning segments follow: residues 270–290 (VWAMIYAHFCGSWGHYTCLSW), 307–327 (AWVSVLPPLGSMIITSIAAPF), 348–368 (IAFLSPATFMMLSSVDLGVPP), 371–391 (IVAFLTSGLALSSFALSGLYC), 403–423 (ILLGITNTVGAVPGIVGVALT), and 435–455 (ISLFAPSIFFYLTGTAVWLAF).

This sequence belongs to the major facilitator superfamily. Sodium/anion cotransporter (TC 2.A.1.14) family.

It is found in the plastid. Its subcellular location is the chloroplast membrane. Functionally, probable anion transporter. In Oryza sativa subsp. japonica (Rice), this protein is Probable anion transporter 5, chloroplastic (PHT4;5).